The sequence spans 163 residues: Staphylokinase (163 aa).

Positions 1–27 are cleaved as a signal peptide; it reads MLKRGLLFLTVLLLLFSFSSITNEVSA.

The protein belongs to the staphylokinase family.

The protein resides in the secreted. Potent plasminogen activator that converts plasminogen into plasmin. It forms a 1:1 complex with plasmin, which in turn activates other plasminogen molecules. The polypeptide is Staphylokinase (sak) (Staphylococcus aureus (strain MRSA252)).